The primary structure comprises 617 residues: Proline--tRNA ligase (617 aa).

It belongs to the class-II aminoacyl-tRNA synthetase family. ProS type 1 subfamily. Homodimer.

The protein localises to the cytoplasm. The enzyme catalyses tRNA(Pro) + L-proline + ATP = L-prolyl-tRNA(Pro) + AMP + diphosphate. Catalyzes the attachment of proline to tRNA(Pro) in a two-step reaction: proline is first activated by ATP to form Pro-AMP and then transferred to the acceptor end of tRNA(Pro). As ProRS can inadvertently accommodate and process non-cognate amino acids such as alanine and cysteine, to avoid such errors it has two additional distinct editing activities against alanine. One activity is designated as 'pretransfer' editing and involves the tRNA(Pro)-independent hydrolysis of activated Ala-AMP. The other activity is designated 'posttransfer' editing and involves deacylation of mischarged Ala-tRNA(Pro). The misacylated Cys-tRNA(Pro) is not edited by ProRS. This is Proline--tRNA ligase from Streptococcus agalactiae serotype Ia (strain ATCC 27591 / A909 / CDC SS700).